The primary structure comprises 654 residues: Endoplasmic reticulum chaperone BiP (654 aa).

The signal sequence occupies residues 1–18; it reads MKLSLVAAVLLLLCAARA. A required for interaction with ELAPOR1 region spans residues 1–80; it reads MKLSLVAAVL…EGERLIGDAA (80 aa). An ATP-binding site is contributed by 36-39; that stretch reads GTTY. At Ser86 the chain carries Phosphoserine. Lys96 contributes to the ATP binding site. At Lys125 the chain carries N6-acetyllysine. The interval 125–280 is nucleotide-binding (NBD); it reads KPYIQVDIGG…KKKTGKDVRK (156 aa). Tyr160 carries the post-translational modification 3'-nitrotyrosine. Residue Lys213 is modified to N6-acetyllysine. Residue 227-229 coordinates ATP; that stretch reads GGT. Lys271 is modified (N6-acetyllysine). 293 to 300 is an ATP binding site; sequence EKAKRALS. Lys326 is modified (N6-acetyllysine). Lys352 participates in a covalent cross-link: Glycyl lysine isopeptide (Lys-Gly) (interchain with G-Cter in SUMO2). At Lys353 the chain carries N6-acetyllysine; alternate. Lys353 participates in a covalent cross-link: Glycyl lysine isopeptide (Lys-Gly) (interchain with G-Cter in SUMO1); alternate. Position 364–367 (364–367) interacts with ATP; that stretch reads GSTR. Residues 409–419 form an interdomain linker region; it reads QDTGDLVLLDV. Residues 420–500 form a substrate-binding (SBD) region; it reads CPLTLGIETV…PRGVPQIEVT (81 aa). Lys447 carries the N6-succinyllysine modification. Position 492 is an omega-N-methylarginine (Arg492). Position 518 is an O-AMP-threonine; alternate (Thr518). Thr518 carries the phosphothreonine; alternate modification. N6,N6,N6-trimethyllysine; by METTL21A; in vitro is present on Lys585. Position 585 is an N6,N6-dimethyllysine; alternate (Lys585). N6-methyllysine; alternate is present on Lys585. At Lys591 the chain carries N6-methyllysine. The disordered stretch occupies residues 632-654; the sequence is SKLYGSAGPPPTGEEDTSERDEL. 2 positions are modified to phosphothreonine: Thr643 and Thr648. Positions 644–654 are enriched in acidic residues; it reads GEEDTSERDEL. At Ser649 the chain carries Phosphoserine. The Prevents secretion from ER motif lies at 651–654; sequence RDEL.

It belongs to the heat shock protein 70 family. In terms of assembly, monomer and homooligomer; homooligomerization via the interdomain linker inactivates the chaperone activity and acts as a storage of HSPA5/BiP molecules. Interacts with DNAJC1 (via J domain). Component of an EIF2 complex at least composed of CELF1/CUGBP1, CALR, CALR3, EIF2S1, EIF2S2, HSP90B1 and HSPA5. Part of a large chaperone multiprotein complex comprising DNAJB11, HSP90B1, HSPA5, HYOU, PDIA2, PDIA4, PDIA6, PPIB, SDF2L1, UGGT1 and very small amounts of ERP29, but not, or at very low levels, CALR nor CANX. Interacts with TMEM132A and TRIM21. May form a complex with ERLEC1, OS9, SEL1L and SYVN1. Interacts with DNAJC10. Interacts with DNAJB9/ERdj4; leading to recruit HSPA5/BiP to ERN1/IRE1. Interacts with ERN1/IRE1 (via luminal domain); the interaction takes place following interaction with DNAJB9/ERdj4 and leads to inactivate ERN1/IRE1, the interaction also competitively inhibits ERN1 interaction with MANF. Interacts directly with MANF (via SAP domain); the interaction inhibits ATP binding to HSPA5/BiP and subsequent nucleotide exchange. Interacts with EIF2AK3/PERK (via luminal domain); interaction leads to inactivate EIF2AK3/PERK. Interacts with MX1. Interacts with METTL23. Interacts with CEMIP; the interaction induces calcium leakage from the endoplasmic reticulum and cell migration. Interacts with PCSK4 form; the interaction takes place in the endoplasmic reticulum. Interacts with CIPC. Interacts with CCDC88B (via C-terminus); the interaction opposes ERN1-mediated JNK activation, protecting against apoptosis. Interacts with INPP5K; necessary for INPP5K localization at the endoplasmic reticulum. Interacts with MANF; the interaction is direct. Interacts with LOXL2; leading to activate the ERN1/IRE1-XBP1 pathway of the unfolded protein response. Interacts with CLU under stressed condition; interaction increases CLU protein stability; facilitates its retrotranslocation and redistribution to the mitochondria; cooperatively suppress stress-induced apoptosis by stabilizing mitochondrial membrane integrity. Interacts with CCDC47. Interacts with CLN3. Interacts with ELAPOR1; may regulate the function of HSPA5 in apoptosis and cell proliferation. Interacts with CASP7. Interacts with ILDR2; the interaction stabilizes ILDR2 expression. Interacts with ADAM7. In unstressed cells, AMPylation at Thr-518 by FICD inactivates the chaperome activity: AMPylated form is locked in a relatively inert state and only weakly stimulated by J domain-containing proteins. In response to endoplasmic reticulum stress, de-AMPylation by the same protein, FICD, restores the chaperone activity.

The protein resides in the endoplasmic reticulum lumen. It localises to the melanosome. It is found in the cytoplasm. The protein localises to the cell surface. The enzyme catalyses ATP + H2O = ADP + phosphate + H(+). Its activity is regulated as follows. The chaperone activity is regulated by ATP-induced allosteric coupling of the nucleotide-binding (NBD) and substrate-binding (SBD) domains. In the ADP-bound and nucleotide-free (apo) states, the two domains have little interaction. In contrast, in the ATP-bound state the two domains are tightly coupled, which results in drastically accelerated kinetics in both binding and release of polypeptide substrates. J domain-containing co-chaperones (DNAJB9/ERdj4 or DNAJC10/ERdj5) stimulate the ATPase activity and are required for efficient substrate recognition by HSPA5/BiP. Homooligomerization inactivates participating HSPA5/BiP protomers and probably act as reservoirs to store HSPA5/BiP molecules when they are not needed by the cell. Its function is as follows. Endoplasmic reticulum chaperone that plays a key role in protein folding and quality control in the endoplasmic reticulum lumen. Involved in the correct folding of proteins and degradation of misfolded proteins via its interaction with DNAJC10/ERdj5, probably to facilitate the release of DNAJC10/ERdj5 from its substrate. Acts as a key repressor of the EIF2AK3/PERK and ERN1/IRE1-mediated unfolded protein response (UPR). In the unstressed endoplasmic reticulum, recruited by DNAJB9/ERdj4 to the luminal region of ERN1/IRE1, leading to disrupt the dimerization of ERN1/IRE1, thereby inactivating ERN1/IRE1. Also binds and inactivates EIF2AK3/PERK in unstressed cells. Accumulation of misfolded protein in the endoplasmic reticulum causes release of HSPA5/BiP from ERN1/IRE1 and EIF2AK3/PERK, allowing their homodimerization and subsequent activation. Plays an auxiliary role in post-translational transport of small presecretory proteins across endoplasmic reticulum (ER). May function as an allosteric modulator for SEC61 channel-forming translocon complex, likely cooperating with SEC62 to enable the productive insertion of these precursors into SEC61 channel. Appears to specifically regulate translocation of precursors having inhibitory residues in their mature region that weaken channel gating. May also play a role in apoptosis and cell proliferation. In Ictidomys tridecemlineatus (Thirteen-lined ground squirrel), this protein is Endoplasmic reticulum chaperone BiP.